The following is a 347-amino-acid chain: Quinolinate synthase (347 aa).

2 residues coordinate iminosuccinate: His47 and Ser68. Cys113 serves as a coordination point for [4Fe-4S] cluster. Iminosuccinate is bound by residues 139–141 and Ser156; that span reads YAN. Position 200 (Cys200) interacts with [4Fe-4S] cluster. Iminosuccinate-binding positions include 226–228 and Thr243; that span reads HPE. [4Fe-4S] cluster is bound at residue Cys297.

The protein belongs to the quinolinate synthase family. Type 1 subfamily. [4Fe-4S] cluster serves as cofactor.

The protein resides in the cytoplasm. The catalysed reaction is iminosuccinate + dihydroxyacetone phosphate = quinolinate + phosphate + 2 H2O + H(+). It functions in the pathway cofactor biosynthesis; NAD(+) biosynthesis; quinolinate from iminoaspartate: step 1/1. Catalyzes the condensation of iminoaspartate with dihydroxyacetone phosphate to form quinolinate. The polypeptide is Quinolinate synthase (Salmonella typhi).